A 238-amino-acid polypeptide reads, in one-letter code: Deoxyribose-phosphate aldolase (238 aa).

Aspartate 102 serves as the catalytic Proton donor/acceptor. The active-site Schiff-base intermediate with acetaldehyde is the lysine 164. The Proton donor/acceptor role is filled by lysine 193.

The protein belongs to the DeoC/FbaB aldolase family. DeoC type 1 subfamily.

It is found in the cytoplasm. It carries out the reaction 2-deoxy-D-ribose 5-phosphate = D-glyceraldehyde 3-phosphate + acetaldehyde. The protein operates within carbohydrate degradation; 2-deoxy-D-ribose 1-phosphate degradation; D-glyceraldehyde 3-phosphate and acetaldehyde from 2-deoxy-alpha-D-ribose 1-phosphate: step 2/2. Catalyzes a reversible aldol reaction between acetaldehyde and D-glyceraldehyde 3-phosphate to generate 2-deoxy-D-ribose 5-phosphate. This is Deoxyribose-phosphate aldolase from Rhodospirillum rubrum (strain ATCC 11170 / ATH 1.1.1 / DSM 467 / LMG 4362 / NCIMB 8255 / S1).